We begin with the raw amino-acid sequence, 402 residues long: Cysteine-rich venom protein (402 aa).

The N-terminal stretch at 1-13 (MNLALFIIFATIF) is a signal peptide. The region spanning 57 to 199 (LETHNQLRNK…VKKVLYTCNY (143 aa)) is the SCP domain.

Belongs to the CRISP family. Contains 7 disulfide bonds. In terms of tissue distribution, expressed by the venom gland.

Its subcellular location is the secreted. This chain is Cysteine-rich venom protein, found in Tityus serrulatus (Brazilian scorpion).